A 401-amino-acid chain; its full sequence is Glutamyl-tRNA reductase (401 aa).

Residues 45 to 48 (TCNR), Ser-101, 106 to 108 (EDQ), and Gln-112 contribute to the substrate site. The active-site Nucleophile is Cys-46. Position 177–182 (177–182 (GYGDVG)) interacts with NADP(+).

Belongs to the glutamyl-tRNA reductase family. As to quaternary structure, homodimer.

It carries out the reaction (S)-4-amino-5-oxopentanoate + tRNA(Glu) + NADP(+) = L-glutamyl-tRNA(Glu) + NADPH + H(+). It functions in the pathway porphyrin-containing compound metabolism; protoporphyrin-IX biosynthesis; 5-aminolevulinate from L-glutamyl-tRNA(Glu): step 1/2. Catalyzes the NADPH-dependent reduction of glutamyl-tRNA(Glu) to glutamate 1-semialdehyde (GSA). This is Glutamyl-tRNA reductase from Clostridium botulinum (strain Eklund 17B / Type B).